Consider the following 632-residue polypeptide: MAU2 chromatid cohesion factor homolog (632 aa).

2 TPR repeats span residues 453 to 486 (GGFYYVQGLHAFHKNSFHEAKRFLRETLKMANAE) and 493 to 526 (SCSLVLLSHVFLSIGNSKESMNMVTPAMQLASKI).

This sequence belongs to the SCC4/mau-2 family. In terms of assembly, interacts with Nipped-B to form the cohesin loading complex.

Its subcellular location is the nucleus. It is found in the nucleoplasm. In terms of biological role, required for association of the cohesin complex with chromatin during interphase. Plays a role in sister chromatid cohesion and normal progression through prometaphase. This chain is MAU2 chromatid cohesion factor homolog, found in Drosophila yakuba (Fruit fly).